Consider the following 310-residue polypeptide: Olfactory receptor 4K14 (310 aa).

The Extracellular segment spans residues 1-25 (MDPQNYSLVSEFVLHGLCTSRHLQN). Asparagine 5 carries an N-linked (GlcNAc...) asparagine glycan. A helical transmembrane segment spans residues 26–49 (FFFIFFFGVYVAIMLGNLLILVTV). At 50 to 58 (ISDPCLHSS) the chain is on the cytoplasmic side. Residues 59 to 80 (PMYFLLGNLAFLDMWLASFATP) form a helical membrane-spanning segment. Topologically, residues 81–101 (KMIRDFLSDQKLISFGGCMAQ) are extracellular. Cysteine 98 and cysteine 190 are joined by a disulfide. The helical transmembrane segment at 102–121 (IFFLHFTGGAEMVLLVSMAY) threads the bilayer. Over 122 to 140 (DRYVAICKPLHYMTLMSWQ) the chain is Cytoplasmic. The chain crosses the membrane as a helical span at residues 141–159 (TCIRLVLASWVVGFVHSIS). The Extracellular portion of the chain corresponds to 160-196 (QVAFTVNLPYCGPNEVDSFFCDLPLVIKLACMDTYVL). Residues 197 to 220 (GIIMISDSGLLSLSCFLLLLISYT) traverse the membrane as a helical segment. At 221 to 236 (VILLAIRQRAAGSTSK) the chain is on the cytoplasmic side. The chain crosses the membrane as a helical span at residues 237-259 (ALSTCSAHIMVVTLFFGPCIFVY). Over 260-270 (VRPFSRFSVDK) the chain is Extracellular. The chain crosses the membrane as a helical span at residues 271 to 290 (LLSVFYTIFTPLLNPIIYTL). The Cytoplasmic segment spans residues 291–310 (RNEEMKAAMKKLQNRRVTFQ).

The protein belongs to the G-protein coupled receptor 1 family.

The protein resides in the cell membrane. Its function is as follows. Odorant receptor. In Homo sapiens (Human), this protein is Olfactory receptor 4K14 (OR4K14).